Consider the following 196-residue polypeptide: ATP-dependent Clp protease proteolytic subunit (196 aa).

S98 (nucleophile) is an active-site residue. H123 is an active-site residue.

Belongs to the peptidase S14 family. In terms of assembly, fourteen ClpP subunits assemble into 2 heptameric rings which stack back to back to give a disk-like structure with a central cavity, resembling the structure of eukaryotic proteasomes.

The protein resides in the cytoplasm. The catalysed reaction is Hydrolysis of proteins to small peptides in the presence of ATP and magnesium. alpha-casein is the usual test substrate. In the absence of ATP, only oligopeptides shorter than five residues are hydrolyzed (such as succinyl-Leu-Tyr-|-NHMec, and Leu-Tyr-Leu-|-Tyr-Trp, in which cleavage of the -Tyr-|-Leu- and -Tyr-|-Trp bonds also occurs).. In terms of biological role, cleaves peptides in various proteins in a process that requires ATP hydrolysis. Has a chymotrypsin-like activity. Plays a major role in the degradation of misfolded proteins. This is ATP-dependent Clp protease proteolytic subunit from Acidobacterium capsulatum (strain ATCC 51196 / DSM 11244 / BCRC 80197 / JCM 7670 / NBRC 15755 / NCIMB 13165 / 161).